The following is a 91-amino-acid chain: Elongation factor 1-beta (91 aa).

Belongs to the EF-1-beta/EF-1-delta family.

Promotes the exchange of GDP for GTP in EF-1-alpha/GDP, thus allowing the regeneration of EF-1-alpha/GTP that could then be used to form the ternary complex EF-1-alpha/GTP/AAtRNA. This Pyrococcus furiosus (strain ATCC 43587 / DSM 3638 / JCM 8422 / Vc1) protein is Elongation factor 1-beta.